The primary structure comprises 503 residues: Maturase K (503 aa).

Belongs to the intron maturase 2 family. MatK subfamily.

Its subcellular location is the plastid. It localises to the chloroplast. In terms of biological role, usually encoded in the trnK tRNA gene intron. Probably assists in splicing its own and other chloroplast group II introns. The polypeptide is Maturase K (Syzygium australe (Brush cherry)).